A 428-amino-acid polypeptide reads, in one-letter code: Probable pectin lyase F (428 aa).

The first 20 residues, 1-20, serve as a signal peptide directing secretion; the sequence is MVLLHPLLTAAALLGASARA. A disulfide bridge connects residues C83 and C107. Residue R257 is part of the active site. A glycan (N-linked (GlcNAc...) asparagine) is linked at N276. C324 and C332 form a disulfide bridge. Positions 383-428 are disordered; that stretch reads GSGGSGAASSSVSITPSPTSSAIPSSSATPSSSAYARRHYARHHHY. The span at 389 to 417 shows a compositional bias: low complexity; the sequence is AASSSVSITPSPTSSAIPSSSATPSSSAY. The span at 418-428 shows a compositional bias: basic residues; it reads ARRHYARHHHY.

Belongs to the polysaccharide lyase 1 family.

Its subcellular location is the secreted. It carries out the reaction Eliminative cleavage of (1-&gt;4)-alpha-D-galacturonan methyl ester to give oligosaccharides with 4-deoxy-6-O-methyl-alpha-D-galact-4-enuronosyl groups at their non-reducing ends.. Functionally, pectinolytic enzymes consist of four classes of enzymes: pectin lyase, polygalacturonase, pectin methylesterase and rhamnogalacturonase. Among pectinolytic enzymes, pectin lyase is the most important in depolymerization of pectin, since it cleaves internal glycosidic bonds of highly methylated pectins. This Aspergillus oryzae (strain ATCC 42149 / RIB 40) (Yellow koji mold) protein is Probable pectin lyase F (pelF).